A 445-amino-acid chain; its full sequence is MKVKMLSRNPDNYVRETKLDIQRVPRNYDPTLHPFEVPREYVRALNATKLERVFAKPFLASLDGHRDGVNCLAKHPKSLASVLSGACDGEVKIWNLTKRKCIRTIQAHEGFVRGMCTRFCGTSFFTVGDDKTVKQWKMDGPGYGEEEEPLYTVLGKTVYTGIDHHWKDPVFATCGQQVDIWDEQRTSPVCSMNWGFDSISSVKFNPVETFLLGSCASDRNIVLYDMRQATPLKKVILEMRTNTICWNPMEAFNFTAANEDYNLYTFDMRALDTPVMVHMDHVSAVLDVDYSPTGKEFVSASFDKSIRIFPVDKSRSREVYHTKRMQHVMCVKWTSDSKYIMCGSDEMNIRLWKANASEKLGVLTSREKAANDYNQKLKEKFQYHPHVKRIARHRHLPKSIYSQIQEQRVMKEARRRKEMNRRKHSKPGSVPIVSERKKHVVAVVK.

N6-acetyllysine is present on lysine 49. WD repeat units follow at residues 64 to 104 (GHRD…CIRT), 107 to 146 (AHEG…YGEE), 149 to 191 (PLYT…PVCS), 194 to 234 (WGFD…PLKK), 236 to 276 (ILEM…TPVM), 280 to 319 (DHVS…SREV), and 323 to 362 (KRMQ…KLGV). Residues 353-441 (KANASEKLGV…IVSERKKHVV (89 aa)) are required for nucleolar location.

It belongs to the WD repeat DCAF13/WDSOF1 family. Component of the DCX(DCAF13) E3 ubiquitin ligase complex, at least composed of CUL4 (CUL4A or CUL4B), DDB1, DCAF13 and RBX1. Interacts (via WD40 domain) with DDB1. Interacts with ESR1 and LATS1. In terms of tissue distribution, uniformly distributed in trophectoderm cells and inner cells mass in blastocyst embryos. Expressed in oocytes as early as the primordial follicle stage. Endometrial expression increases during decidualization and is highly expressed in decidua.

The protein localises to the nucleus. It is found in the nucleolus. The protein operates within protein modification; protein ubiquitination. In terms of biological role, part of the small subunit (SSU) processome, first precursor of the small eukaryotic ribosomal subunit. During the assembly of the SSU processome in the nucleolus, many ribosome biogenesis factors, an RNA chaperone and ribosomal proteins associate with the nascent pre-rRNA and work in concert to generate RNA folding, modifications, rearrangements and cleavage as well as targeted degradation of pre-ribosomal RNA by the RNA exosome. Participates in the 18S rRNA processing in growing oocytes, being essential for oocyte nonsurrounded nucleolus (NSN) to surrounded nucleolus (SN) transition. Substrate-recognition component of a DCX (DDB1-CUL4-X-box) E3 ubiquitin-protein ligase complex that plays a key role in embryo preimplantation and is required for normal meiotic cycle progression in oocytes. Acts as a maternal factor that regulates oocyte and zygotic chromatin tightness during maternal to zygotic transition. Also involved in the transformation of the endometrium into the decidua, known as decidualization, providing a solid foundation for implantation of blastocysts. Recognizes the histone methyltransferases SUV39H1 and SUV39H2 and directs them to polyubiquitination and proteasomal degradation, which facilitates the H3K9me3 removal and early zygotic gene expression, essential steps for progressive genome reprogramming and the establishment of pluripotency during preimplantation embryonic development. Supports the spindle assembly and chromosome condensation during oocyte meiotic division by targeting the polyubiquitination and degradation of PTEN, a lipid phosphatase that inhibits PI3K pathway as well as oocyte growth and maturation. Targets PMP22 for polyubiquitination and proteasomal degradation. This chain is DDB1- and CUL4-associated factor 13 (Dcaf13), found in Mus musculus (Mouse).